The primary structure comprises 493 residues: Glutamyl-tRNA(Gln) amidotransferase subunit A (493 aa).

Active-site charge relay system residues include Lys81 and Ser156. The active-site Acyl-ester intermediate is the Ser180.

This sequence belongs to the amidase family. GatA subfamily. In terms of assembly, heterotrimer of A, B and C subunits.

The enzyme catalyses L-glutamyl-tRNA(Gln) + L-glutamine + ATP + H2O = L-glutaminyl-tRNA(Gln) + L-glutamate + ADP + phosphate + H(+). Functionally, allows the formation of correctly charged Gln-tRNA(Gln) through the transamidation of misacylated Glu-tRNA(Gln) in organisms which lack glutaminyl-tRNA synthetase. The reaction takes place in the presence of glutamine and ATP through an activated gamma-phospho-Glu-tRNA(Gln). This chain is Glutamyl-tRNA(Gln) amidotransferase subunit A, found in Mycobacterium avium (strain 104).